The following is a 149-amino-acid chain: VapC ribonuclease PF0355 (149 aa).

A PINc domain is found at 8–122; that stretch reads TFDSLALIKM…ITDDSKRYEP (115 aa). Mg(2+) is bound by residues Asp-10 and Asp-98.

Belongs to the PINc/VapC protein family. The cofactor is Mg(2+).

Toxic component of a type II toxin-antitoxin (TA) system. An RNase. The sequence is that of VapC ribonuclease PF0355 from Pyrococcus furiosus (strain ATCC 43587 / DSM 3638 / JCM 8422 / Vc1).